The chain runs to 191 residues: Dephospho-CoA kinase (191 aa).

One can recognise a DPCK domain in the interval 3 to 191; the sequence is AIGITGSYAS…KLILVIARKL (189 aa). 11–16 serves as a coordination point for ATP; sequence ASGKTF.

Belongs to the CoaE family.

The protein localises to the cytoplasm. It carries out the reaction 3'-dephospho-CoA + ATP = ADP + CoA + H(+). It participates in cofactor biosynthesis; coenzyme A biosynthesis; CoA from (R)-pantothenate: step 5/5. In terms of biological role, catalyzes the phosphorylation of the 3'-hydroxyl group of dephosphocoenzyme A to form coenzyme A. The chain is Dephospho-CoA kinase from Rickettsia felis (strain ATCC VR-1525 / URRWXCal2) (Rickettsia azadi).